The chain runs to 649 residues: ATP-dependent DNA helicase Q1 (649 aa).

The 176-residue stretch at 100 to 275 (INVTMAGKEV…QKILCIEKCF (176 aa)) folds into the Helicase ATP-binding domain. ATP is bound at residue 113-120 (MPTGGGKG). Residues 219-222 (DEVH) carry the DEVH box motif. The region spanning 300 to 451 (FIEDIVKLIN…EMVSYCQNIS (152 aa)) is the Helicase C-terminal domain. 4 residues coordinate Zn(2+): cysteine 453, cysteine 471, cysteine 475, and cysteine 478. Residues lysine 514 and lysine 522 each carry the N6-acetyllysine modification. Serine 597 and serine 602 each carry phosphoserine. Residues 597-608 (SFRVESSQTCHS) show a composition bias toward polar residues. The interval 597-649 (SFRVESSQTCHSEQGDKKMEEKNSGNFQKKAANMLQQSGSKNTGAKKRKIDDA) is disordered. Residues 609–619 (EQGDKKMEEKN) are compositionally biased toward basic and acidic residues. Residues 630–639 (MLQQSGSKNT) show a composition bias toward polar residues. A Phosphoserine modification is found at serine 634. Positions 640 to 649 (GAKKRKIDDA) are enriched in basic residues.

It belongs to the helicase family. RecQ subfamily. As to quaternary structure, may form homodimers or higher order oligomers. Interacts with EXO1. Interacts with MLH1. Interacts with PARP1. It depends on Mg(2+) as a cofactor. The cofactor is Mn(2+). Zn(2+) serves as cofactor.

It is found in the nucleus. It carries out the reaction Couples ATP hydrolysis with the unwinding of duplex DNA by translocating in the 3'-5' direction.. The catalysed reaction is ATP + H2O = ADP + phosphate + H(+). The enzyme catalyses dATP + H2O = dADP + phosphate + H(+). Its function is as follows. DNA helicase that plays a role in DNA damage repair and genome stability. Exhibits a magnesium- and ATP-dependent DNA-helicase activity that unwinds single- and double-stranded DNA in a 3'-5' direction. Plays a role in restoring regressed replication forks. Required to restart stalled replication forks induced by abortive topoisomerase 1 and 2 lesions. May play a role in the repair of DNA that is damaged by ultraviolet light or other mutagens. This chain is ATP-dependent DNA helicase Q1 (RECQL), found in Pongo abelii (Sumatran orangutan).